Here is a 1377-residue protein sequence, read N- to C-terminus: DNA-directed RNA polymerase subunit beta (1377 aa).

This sequence belongs to the RNA polymerase beta chain family. As to quaternary structure, the RNAP catalytic core consists of 2 alpha, 1 beta, 1 beta' and 1 omega subunit. When a sigma factor is associated with the core the holoenzyme is formed, which can initiate transcription.

The enzyme catalyses RNA(n) + a ribonucleoside 5'-triphosphate = RNA(n+1) + diphosphate. Its function is as follows. DNA-dependent RNA polymerase catalyzes the transcription of DNA into RNA using the four ribonucleoside triphosphates as substrates. In Cereibacter sphaeroides (strain ATCC 17029 / ATH 2.4.9) (Rhodobacter sphaeroides), this protein is DNA-directed RNA polymerase subunit beta.